Reading from the N-terminus, the 86-residue chain is Large ribosomal subunit protein eL20 (86 aa).

The protein belongs to the eukaryotic ribosomal protein eL20 family. Part of the 50S ribosomal subunit. Binds 23S rRNA.

In Metallosphaera sedula (strain ATCC 51363 / DSM 5348 / JCM 9185 / NBRC 15509 / TH2), this protein is Large ribosomal subunit protein eL20.